Here is a 247-residue protein sequence, read N- to C-terminus: Carboxy-S-adenosyl-L-methionine synthase (247 aa).

Residues Tyr-40, 65 to 67 (GAS), 90 to 91 (DN), 122 to 123 (DI), Asn-137, and Arg-204 contribute to the S-adenosyl-L-methionine site.

It belongs to the class I-like SAM-binding methyltransferase superfamily. Cx-SAM synthase family. Homodimer.

It carries out the reaction prephenate + S-adenosyl-L-methionine = carboxy-S-adenosyl-L-methionine + 3-phenylpyruvate + H2O. Functionally, catalyzes the conversion of S-adenosyl-L-methionine (SAM) to carboxy-S-adenosyl-L-methionine (Cx-SAM). This chain is Carboxy-S-adenosyl-L-methionine synthase, found in Pseudomonas fluorescens (strain Pf0-1).